Here is a 101-residue protein sequence, read N- to C-terminus: Movement protein (101 aa).

Residues 30-50 (EVAILSFVALICIYLLYLWVL) traverse the membrane as a helical segment. Residues 80-101 (PIPNTLEPTAPVHPGPFVPGQG) form a disordered region. Positions 90–101 (PVHPGPFVPGQG) are enriched in pro residues.

The protein belongs to the mastrevirus movement protein family. As to quaternary structure, interacts with the capsid protein (CP). Part of a MP-CP-viral DNA complex.

The protein resides in the host membrane. Involved in the viral transport within, and between cells. The chain is Movement protein from Avena sativa (Oat).